The primary structure comprises 213 residues: Adenylate kinase (213 aa).

10–15 is a binding site for ATP; the sequence is GAGKGT. An NMP region spans residues 30–59; it reads STGDMFRAAMANQTEMGILAKSYIDKGDLV. AMP is bound by residues Thr31, Arg36, 57–59, 86–89, and Gln93; these read DLV and GYPR. Residues 127–160 form an LID region; it reads GRIIHKETGETFHKVFNPPVGDYKEEDFYQREDD. ATP is bound by residues Arg128 and 137–138; that span reads TF. Arg157 and Arg168 together coordinate AMP. Gln196 provides a ligand contact to ATP.

It belongs to the adenylate kinase family. Monomer.

The protein resides in the cytoplasm. The catalysed reaction is AMP + ATP = 2 ADP. Its pathway is purine metabolism; AMP biosynthesis via salvage pathway; AMP from ADP: step 1/1. Its function is as follows. Catalyzes the reversible transfer of the terminal phosphate group between ATP and AMP. Plays an important role in cellular energy homeostasis and in adenine nucleotide metabolism. The sequence is that of Adenylate kinase from Streptococcus suis (strain 98HAH33).